The sequence spans 568 residues: 2-succinyl-5-enolpyruvyl-6-hydroxy-3-cyclohexene-1-carboxylate synthase (568 aa).

This sequence belongs to the TPP enzyme family. MenD subfamily. As to quaternary structure, homodimer. Mg(2+) serves as cofactor. Requires Mn(2+) as cofactor. Thiamine diphosphate is required as a cofactor.

The enzyme catalyses isochorismate + 2-oxoglutarate + H(+) = 5-enolpyruvoyl-6-hydroxy-2-succinyl-cyclohex-3-ene-1-carboxylate + CO2. The protein operates within quinol/quinone metabolism; 1,4-dihydroxy-2-naphthoate biosynthesis; 1,4-dihydroxy-2-naphthoate from chorismate: step 2/7. It functions in the pathway quinol/quinone metabolism; menaquinone biosynthesis. Functionally, catalyzes the thiamine diphosphate-dependent decarboxylation of 2-oxoglutarate and the subsequent addition of the resulting succinic semialdehyde-thiamine pyrophosphate anion to isochorismate to yield 2-succinyl-5-enolpyruvyl-6-hydroxy-3-cyclohexene-1-carboxylate (SEPHCHC). The sequence is that of 2-succinyl-5-enolpyruvyl-6-hydroxy-3-cyclohexene-1-carboxylate synthase from Actinobacillus pleuropneumoniae serotype 7 (strain AP76).